A 230-amino-acid chain; its full sequence is Large ribosomal subunit protein uL1 (230 aa).

This sequence belongs to the universal ribosomal protein uL1 family. In terms of assembly, part of the 50S ribosomal subunit.

Functionally, binds directly to 23S rRNA. The L1 stalk is quite mobile in the ribosome, and is involved in E site tRNA release. Protein L1 is also a translational repressor protein, it controls the translation of the L11 operon by binding to its mRNA. This chain is Large ribosomal subunit protein uL1, found in Rhodopseudomonas palustris (strain BisA53).